Here is a 150-residue protein sequence, read N- to C-terminus: Viral late gene transcription factor 2 (150 aa).

Belongs to the chordopoxvirinae VLTF-2 family. As to quaternary structure, interacts with itself. Interacts with the late transcription factors VLTF-1.

Acts with RNA polymerase to initiate transcription from late gene promoters. This chain is Viral late gene transcription factor 2 (VLTF2), found in Homo sapiens (Human).